A 393-amino-acid chain; its full sequence is Putative B3 domain-containing protein Os06g0632500 (393 aa).

3 consecutive DNA-binding regions (TF-B3) follow at residues 27–123 (LSVP…FDPG), 141–238 (RPRF…FLQN), and 316–393 (NSFT…VQRR).

The protein localises to the nucleus. This chain is Putative B3 domain-containing protein Os06g0632500, found in Oryza sativa subsp. japonica (Rice).